We begin with the raw amino-acid sequence, 497 residues long: 3-octaprenyl-4-hydroxybenzoate carboxy-lyase (497 aa).

Asparagine 175 is a Mn(2+) binding site. Prenylated FMN-binding positions include 178–180 (IYR), 192–194 (RWL), and 197–198 (RG). Glutamate 241 provides a ligand contact to Mn(2+). The active-site Proton donor is the aspartate 290.

Belongs to the UbiD family. Homohexamer. Requires prenylated FMN as cofactor. The cofactor is Mn(2+).

The protein localises to the cell membrane. The catalysed reaction is a 4-hydroxy-3-(all-trans-polyprenyl)benzoate + H(+) = a 2-(all-trans-polyprenyl)phenol + CO2. The protein operates within cofactor biosynthesis; ubiquinone biosynthesis. Catalyzes the decarboxylation of 3-octaprenyl-4-hydroxy benzoate to 2-octaprenylphenol, an intermediate step in ubiquinone biosynthesis. This chain is 3-octaprenyl-4-hydroxybenzoate carboxy-lyase, found in Shigella sonnei (strain Ss046).